We begin with the raw amino-acid sequence, 782 residues long: Host cell factor homolog hcf-1 (782 aa).

Positions Met-1–Lys-25 are disordered. Positions Arg-14–Lys-25 are enriched in basic and acidic residues. Kelch repeat units lie at residues Leu-55–Asn-103, Ile-105–His-151, Lys-161–Lys-222, Arg-227–Leu-271, and Lys-280–His-324. A phosphoserine mark is found at Ser-423, Ser-431, and Ser-449. The span at Ser-423 to Lys-434 shows a compositional bias: polar residues. A disordered region spans residues Ser-423 to Trp-553. Composition is skewed to polar residues over residues Thr-456 to Thr-469 and Thr-496 to Cys-513. A Phosphoserine modification is found at Ser-498. A compositionally biased stretch (acidic residues) spans Gly-537 to Pro-552.

In terms of assembly, interacts with daf-16/FOXO. Interacts with deacetylase sir-2.1. Interacts with the 14-3-3 family proteins ftt-2 and par-5. Phosphorylated at multiple serine residues. Phosphorylation is developmentally regulated, occurring in embryos but not L1 larvae. Phosphorylation may be cell-cycle-regulated.

Its subcellular location is the nucleus. Its function is as follows. Transcriptional coregulator. Involved in control of the cell cycle and in modulating mitotic histone phosphorylation. Plays a role in modulating lifespan by regulating the transcriptional activity of daf-16/Forkhead box protein O, in concert with protein deacetylase sir-2.1/SIRT1, and perhaps acting independently of the Insulin/IGF-1-like signaling (IIS) mediated pathway. Negatively modulates responses to environmental stresses, including oxidative stress, heat stress, and exposure to heavy metals; acting via regulation of the transcription factors daf-16 and skn-1. May play a role in pharyngeal development via positive modulation of expression of sup-35. The chain is Host cell factor homolog hcf-1 from Caenorhabditis elegans.